The following is a 372-amino-acid chain: N-methyl-L-tryptophan oxidase (372 aa).

FAD is bound at residue 4-34 (DLIIIGSGSVGAAAGYYATRAGLNVLMTDAH). Cys-308 carries the S-8alpha-FAD cysteine modification.

Belongs to the MSOX/MTOX family. MTOX subfamily. Monomer. FAD is required as a cofactor.

The catalysed reaction is N(alpha)-methyl-L-tryptophan + O2 + H2O = L-tryptophan + formaldehyde + H2O2. In terms of biological role, catalyzes the oxidative demethylation of N-methyl-L-tryptophan. In Escherichia coli O81 (strain ED1a), this protein is N-methyl-L-tryptophan oxidase.